The primary structure comprises 170 residues: MATVTSAAVAIPSFTGLKAGASSSSRVSTGASAKVAAAPVARLTVKASLKDVGAVVAATAVSAMLASNAMALEVLLGGDDGSLAFIPGNFSVSAGEKITFKNNAGFPHNVVFDEDEIPAGVDASKISMSEEDLLNAAGETYSVTLSEKGTYTFYCAPHQGAGMVGKVTVN.

Residues 1-71 (MATVTSAAVA…SAMLASNAMA (71 aa)) constitute a chloroplast transit peptide. Residues 72–170 (LEVLLGGDDG…AGMVGKVTVN (99 aa)) enclose the Plastocyanin-like domain. Residues His-108, Cys-155, His-158, and Met-163 each coordinate Cu cation.

Belongs to the plastocyanin family. Cu(2+) is required as a cofactor.

It localises to the plastid. Its subcellular location is the chloroplast thylakoid membrane. Its function is as follows. Participates in electron transfer between P700 and the cytochrome b6-f complex in photosystem I. The protein is Plastocyanin, chloroplastic (PETE) of Solanum lycopersicum (Tomato).